A 2290-amino-acid chain; its full sequence is Autophagy-related protein 2 (2290 aa).

Residues 10–99 (WCKVMLQRYM…MCIEDLQLTF (90 aa)) form the Chorein N-terminal domain. Residues 829 to 1549 (DSMMKSVSAD…PNRDHSAFVV (721 aa)) form a required for epg-6 binding region. 4 disordered regions span residues 1678 to 1727 (IGSK…LGDL), 1805 to 1851 (DDLF…DLTG), 1898 to 1919 (SETE…PARN), and 1967 to 2003 (EHGN…ERNK). A compositionally biased stretch (low complexity) spans 1681–1692 (KKTTPKTSVSSS). Pro residues predominate over residues 1714 to 1723 (RPSPVQPPTP). Over residues 1810–1830 (QSYSSSSSETESESSAPQSSQ) the composition is skewed to low complexity. The stretch at 1972-2011 (LDSIDNEDDNEKQKIEEEMEEDEKEEEEERNKEIQEAVER) forms a coiled coil. Residues 1988–1999 (EEMEEDEKEEEE) are compositionally biased toward acidic residues.

It belongs to the ATG2 family. As to quaternary structure, interacts with epg-6; the interaction is direct.

The protein resides in the preautophagosomal structure membrane. The protein localises to the lipid droplet. Its subcellular location is the endoplasmic reticulum membrane. It localises to the cytoplasm. The enzyme catalyses a 1,2-diacyl-sn-glycero-3-phospho-L-serine(in) = a 1,2-diacyl-sn-glycero-3-phospho-L-serine(out). It catalyses the reaction a 1,2-diacyl-sn-glycero-3-phosphoethanolamine(in) = a 1,2-diacyl-sn-glycero-3-phosphoethanolamine(out). In terms of biological role, lipid transfer protein involved in autophagosome assembly and in the distribution of atg-9 and atg-13 during the autophagy-mediated degradation of protein aggregates. Tethers the edge of the isolation membrane (IM) to the endoplasmic reticulum (ER) and mediates direct lipid transfer from ER to IM for IM expansion. Binds to the ER exit site (ERES), which is the membrane source for autophagosome formation, and extracts phospholipids from the membrane source to the IM for membrane expansion. Involved in autophagy-mediated degradation of ribosomal RNA and ribosomal proteins in lysosomes, which is essential for maintaining nucleotide homeostasis. This chain is Autophagy-related protein 2, found in Caenorhabditis elegans.